The chain runs to 406 residues: Lysophospholipid transporter LplT (406 aa).

The next 11 helical transmembrane spans lie at 16 to 36 (MVAV…LLFA), 53 to 73 (ILQM…GQIA), 91 to 111 (AGAL…LVGV), 139 to 159 (MMEA…GILA), 164 to 184 (MAAL…NLFI), 227 to 247 (LFWG…PVAL), 253 to 273 (ATPT…AGAA), 285 to 305 (CLPA…QNSM), 310 to 330 (LLLI…NALL), 349 to 369 (LGEN…VKLG), and 372 to 392 (VVAV…LLWG).

It belongs to the major facilitator superfamily. LplT (TC 2.A.1.42) family.

It is found in the cell inner membrane. Catalyzes the facilitated diffusion of 2-acyl-glycero-3-phosphoethanolamine (2-acyl-GPE) into the cell. The sequence is that of Lysophospholipid transporter LplT from Yersinia pestis bv. Antiqua (strain Antiqua).